The following is a 113-amino-acid chain: Large ribosomal subunit protein bL19 (113 aa).

Belongs to the bacterial ribosomal protein bL19 family.

Functionally, this protein is located at the 30S-50S ribosomal subunit interface and may play a role in the structure and function of the aminoacyl-tRNA binding site. This chain is Large ribosomal subunit protein bL19, found in Mycobacterium sp. (strain JLS).